The sequence spans 307 residues: Protoheme IX farnesyltransferase (307 aa).

8 helical membrane-spanning segments follow: residues 38-58 (NTLT…LSVL), 65-85 (FFTI…NNYI), 108-128 (PGFA…FLLL), 131-151 (PMAV…YSLW), 158-178 (LNTV…WAAI), 186-206 (IAWM…LALA), 251-271 (LGIT…VLGF), and 287-307 (FVYS…VTFF).

This sequence belongs to the UbiA prenyltransferase family. Protoheme IX farnesyltransferase subfamily. In terms of assembly, interacts with CtaA.

It localises to the cell membrane. It catalyses the reaction heme b + (2E,6E)-farnesyl diphosphate + H2O = Fe(II)-heme o + diphosphate. It functions in the pathway porphyrin-containing compound metabolism; heme O biosynthesis; heme O from protoheme: step 1/1. Its function is as follows. Converts heme B (protoheme IX) to heme O by substitution of the vinyl group on carbon 2 of heme B porphyrin ring with a hydroxyethyl farnesyl side group. The sequence is that of Protoheme IX farnesyltransferase from Bacillus thuringiensis (strain Al Hakam).